Reading from the N-terminus, the 399-residue chain is Imidazolonepropionase (399 aa).

2 residues coordinate Fe(3+): H74 and H76. Zn(2+)-binding residues include H74 and H76. Positions 83, 146, and 176 each coordinate 4-imidazolone-5-propanoate. Residue Y146 participates in N-formimidoyl-L-glutamate binding. Residue H238 coordinates Fe(3+). H238 provides a ligand contact to Zn(2+). Q241 lines the 4-imidazolone-5-propanoate pocket. D312 contacts Fe(3+). D312 is a binding site for Zn(2+). Residues N314 and G316 each contribute to the N-formimidoyl-L-glutamate site. S317 contributes to the 4-imidazolone-5-propanoate binding site.

It belongs to the metallo-dependent hydrolases superfamily. HutI family. It depends on Zn(2+) as a cofactor. The cofactor is Fe(3+).

The protein resides in the cytoplasm. The enzyme catalyses 4-imidazolone-5-propanoate + H2O = N-formimidoyl-L-glutamate. The protein operates within amino-acid degradation; L-histidine degradation into L-glutamate; N-formimidoyl-L-glutamate from L-histidine: step 3/3. In terms of biological role, catalyzes the hydrolytic cleavage of the carbon-nitrogen bond in imidazolone-5-propanoate to yield N-formimidoyl-L-glutamate. It is the third step in the universal histidine degradation pathway. The polypeptide is Imidazolonepropionase (Deinococcus deserti (strain DSM 17065 / CIP 109153 / LMG 22923 / VCD115)).